Here is a 342-residue protein sequence, read N- to C-terminus: uncharacterized protein (342 aa).

In terms of domain architecture, Nudix hydrolase spans 155–309; sequence TYGIHINGYV…KPNCALVMVD (155 aa).

This is an uncharacterized protein from Saccharomyces cerevisiae (strain ATCC 204508 / S288c) (Baker's yeast).